The chain runs to 91 residues: RNA-binding protein Hfq (91 aa).

In terms of domain architecture, Sm spans 9-68 (DPFLNALRRERVPVSIYLVNGIKLQGQVESFDQFVILLKNTVSQMVYKHAISTVVPSRPF). The interval 66–91 (RPFNVGSHQGGSSNYNAQQDDSAGEQ) is disordered. Polar residues predominate over residues 71–91 (GSHQGGSSNYNAQQDDSAGEQ).

The protein belongs to the Hfq family. As to quaternary structure, homohexamer.

Its function is as follows. RNA chaperone that binds small regulatory RNA (sRNAs) and mRNAs to facilitate mRNA translational regulation in response to envelope stress, environmental stress and changes in metabolite concentrations. Also binds with high specificity to tRNAs. The protein is RNA-binding protein Hfq of Shewanella amazonensis (strain ATCC BAA-1098 / SB2B).